The chain runs to 263 residues: Syntaxin-73 (263 aa).

Residues 1–240 (MGVIDLITRV…TVTKLRSSRN (240 aa)) are Cytoplasmic-facing. Serine 12 bears the Phosphoserine mark. The t-SNARE coiled-coil homology domain occupies 169 to 231 (YEMKRIKQAR…KSTNVRLKDT (63 aa)). The helical; Anchor for type IV membrane protein transmembrane segment at 241–261 (FCIDIILLCILLGIAAFIYNS) threads the bilayer. At 262–263 (VK) the chain is on the vesicular side.

Belongs to the syntaxin family. In terms of assembly, part of the t-SNARE complex. Expressed in root, leaf, stem, flower and silique.

The protein localises to the membrane. In terms of biological role, vesicle trafficking protein that functions in the secretory pathway. This chain is Syntaxin-73 (SYP73), found in Arabidopsis thaliana (Mouse-ear cress).